Consider the following 126-residue polypeptide: UPF0538 protein C2orf76 homolog (126 aa).

Belongs to the UPF0538 family.

The chain is UPF0538 protein C2orf76 homolog from Bos taurus (Bovine).